The primary structure comprises 227 residues: 2,3-bisphosphoglycerate-dependent phosphoglycerate mutase (227 aa).

Residues 7–14 (RHGQSEWN), 20–21 (TG), R59, 86–89 (ERHY), K97, 113–114 (RR), and 182–183 (GN) contribute to the substrate site. The active-site Tele-phosphohistidine intermediate is H8. E86 acts as the Proton donor/acceptor in catalysis.

The protein belongs to the phosphoglycerate mutase family. BPG-dependent PGAM subfamily. In terms of assembly, homodimer.

It catalyses the reaction (2R)-2-phosphoglycerate = (2R)-3-phosphoglycerate. The protein operates within carbohydrate degradation; glycolysis; pyruvate from D-glyceraldehyde 3-phosphate: step 3/5. In terms of biological role, catalyzes the interconversion of 2-phosphoglycerate and 3-phosphoglycerate. In Neisseria meningitidis serogroup C (strain 053442), this protein is 2,3-bisphosphoglycerate-dependent phosphoglycerate mutase.